The following is a 100-amino-acid chain: Large ribosomal subunit protein eL36A (100 aa).

The residue at position 2 (threonine 2) is an N-acetylthreonine.

This sequence belongs to the eukaryotic ribosomal protein eL36 family. As to quaternary structure, component of the large ribosomal subunit (LSU). Mature yeast ribosomes consist of a small (40S) and a large (60S) subunit. The 40S small subunit contains 1 molecule of ribosomal RNA (18S rRNA) and 33 different proteins (encoded by 57 genes). The large 60S subunit contains 3 rRNA molecules (25S, 5.8S and 5S rRNA) and 46 different proteins (encoded by 81 genes). In terms of processing, N-terminally acetylated by acetyltransferase NatA.

It is found in the cytoplasm. Component of the ribosome, a large ribonucleoprotein complex responsible for the synthesis of proteins in the cell. The small ribosomal subunit (SSU) binds messenger RNAs (mRNAs) and translates the encoded message by selecting cognate aminoacyl-transfer RNA (tRNA) molecules. The large subunit (LSU) contains the ribosomal catalytic site termed the peptidyl transferase center (PTC), which catalyzes the formation of peptide bonds, thereby polymerizing the amino acids delivered by tRNAs into a polypeptide chain. The nascent polypeptides leave the ribosome through a tunnel in the LSU and interact with protein factors that function in enzymatic processing, targeting, and the membrane insertion of nascent chains at the exit of the ribosomal tunnel. This chain is Large ribosomal subunit protein eL36A, found in Saccharomyces cerevisiae (strain ATCC 204508 / S288c) (Baker's yeast).